The chain runs to 146 residues: Large ribosomal subunit protein uL15 (146 aa).

The segment covering 1–13 has biased composition (basic and acidic residues); that stretch reads MKLHELKAAEGSR. Residues 1–56 form a disordered region; sequence MKLHELKAAEGSRRVRNRVGRGAGSGNGKTSGRGQKGQKARSGGGVRPGFEGGQLP. 2 stretches are compositionally biased toward gly residues: residues 21–35 and 42–52; these read RGAG…GRGQ and SGGGVRPGFEG.

The protein belongs to the universal ribosomal protein uL15 family. Part of the 50S ribosomal subunit.

Its function is as follows. Binds to the 23S rRNA. In Staphylococcus haemolyticus (strain JCSC1435), this protein is Large ribosomal subunit protein uL15.